A 417-amino-acid polypeptide reads, in one-letter code: Gap junction alpha-3 protein (417 aa).

An intramembrane segment occupies 2–15 (GDWSFLGRLLENAQ). The Cytoplasmic portion of the chain corresponds to 16 to 19 (EHST). The helical transmembrane segment at 20 to 40 (VIGKVWLTVLFIFRILVLGAA) threads the bilayer. Over 41 to 71 (AEEVWGDEQSDFTCNTQQPGCENVCYDRAFP) the chain is Extracellular. 3 cysteine pairs are disulfide-bonded: Cys-54/Cys-198, Cys-61/Cys-192, and Cys-65/Cys-187. The helical transmembrane segment at 72–92 (ISHIRFWALQIIFVSTPTLIY) threads the bilayer. Residues 93–158 (LGHVLHIVRM…GALLRTYVFN (66 aa)) are Cytoplasmic-facing. The segment covering 110-128 (EEELLRRDNPQHGRGREPM) has biased composition (basic and acidic residues). The disordered stretch occupies residues 110–141 (EEELLRRDNPQHGRGREPMRTGSPRDPPLRDD). The chain crosses the membrane as a helical span at residues 159 to 179 (IIFKTLFEVGFIAGQYFLYGF). Residues 180–207 (QLQPLYRCDRWPCPNTVDCFISRPTEKT) lie on the Extracellular side of the membrane. Residues 208–228 (IFVIFMLAVACASLVLNMLEI) traverse the membrane as a helical segment. Over 229–417 (YHLGWKKLKQ…GRARPGDLAI (189 aa)) the chain is Cytoplasmic. Disordered stretches follow at residues 247 to 267 (DASE…SSGP) and 334 to 417 (RQVA…DLAI). Low complexity predominate over residues 342-353 (PASKPSSAASSP).

The protein belongs to the connexin family. Alpha-type (group II) subfamily. In terms of assembly, a hemichannel or connexon is composed of a hexamer of connexins. A functional gap junction is formed by the apposition of two hemichannels. Forms heteromeric channels with GJA8.

The protein localises to the cell membrane. The protein resides in the cell junction. Its subcellular location is the gap junction. Its function is as follows. Structural component of lens fiber gap junctions. Gap junctions are dodecameric channels that connect the cytoplasm of adjoining cells. They are formed by the docking of two hexameric hemichannels, one from each cell membrane. Small molecules and ions diffuse from one cell to a neighboring cell via the central pore. The chain is Gap junction alpha-3 protein (Gja3) from Mus musculus (Mouse).